Consider the following 260-residue polypeptide: Kallikrein-8 (260 aa).

The signal sequence occupies residues 1 to 28 (MGRPPPCAIQTWILLFLLMGAWAGLTRA). A propeptide spanning residues 29–32 (QGSK) is cleaved from the precursor. The 225-residue stretch at 33–257 (ILEGQECKPH…YTNWIKKTMG (225 aa)) folds into the Peptidase S1 domain. 6 disulfides stabilise this stretch: cysteine 39–cysteine 173, cysteine 58–cysteine 74, cysteine 145–cysteine 246, cysteine 152–cysteine 218, cysteine 184–cysteine 198, and cysteine 208–cysteine 233. Histidine 73 (charge relay system) is an active-site residue. Residue asparagine 110 is glycosylated (N-linked (GlcNAc...) asparagine). The Charge relay system role is filled by aspartate 120. The Charge relay system role is filled by serine 212.

The protein belongs to the peptidase S1 family. Kallikrein subfamily. Interacts with SPINK9. As to expression, restricted to hippocampus.

The protein localises to the secreted. It is found in the cytoplasm. The enzyme catalyses Cleavage of amide substrates following the basic amino acids Arg or Lys at the P1 position, with a preference for Arg over Lys.. Serine protease which is capable of degrading a number of proteins such as casein, fibrinogen, kininogen, fibronectin and collagen type IV. Also cleaves L1CAM in response to increased neural activity. Induces neurite outgrowth and fasciculation of cultured hippocampal neurons. Plays a role in the formation and maturation of orphan and small synaptic boutons in the Schaffer-collateral pathway, regulates Schaffer-collateral long-term potentiation in the hippocampus and is required for memory acquisition and synaptic plasticity. Involved in skin desquamation and keratinocyte proliferation. Plays a role in the secondary phase of pathogenesis following spinal cord injury. The chain is Kallikrein-8 (Klk8) from Rattus norvegicus (Rat).